We begin with the raw amino-acid sequence, 358 residues long: Src kinase-associated phosphoprotein 2 (358 aa).

Phosphoserine is present on residues serine 5 and serine 9. The homodimerization stretch occupies residues 14–64; it reads PEEIRNLLADVETFVADTLKGENLSKKAKEKRESLIKKIKDVKSVYLQEFQ. Tyrosine 75 is modified (phosphotyrosine). 2 positions are modified to phosphoserine: serine 87 and serine 90. The 104-residue stretch at 116–219 folds into the PH domain; it reads FVIKAGYLEK…WVQQLKFILQ (104 aa). Phosphotyrosine is present on residues tyrosine 151 and tyrosine 197. Position 223 is a phosphoserine (serine 223). Positions 232–292 are disordered; it reads ERGELYDDVD…RDSVHHTSGD (61 aa). The segment covering 255–270 has biased composition (acidic residues); it reads IDDEIYEELPEEEEDT. Residue tyrosine 260 is modified to Phosphotyrosine; by FYN. Phosphoserine occurs at positions 272, 282, and 285. The segment covering 274–292 has biased composition (basic and acidic residues); sequence KMDEQGKGSRDSVHHTSGD. The SH3 domain occupies 296-357; sequence DYANFYQGLW…PKAYLMEMYD (62 aa).

Belongs to the SKAP family. As to quaternary structure, interacts with LAT, GRB2, PTK2B and PRAM1. Homodimer. Interacts with FYB1, which is required for SKAP2 protein stability. Interacts with PTPNS1. Part of a complex consisting of SKAP2, FYB1 and PTPNS1. Part of a complex consisting of SKAP2, FYB1 and PIRB. May interact with actin. May interact with FYN, HCK and LYN. Interacts with FASLG. Post-translationally, dephosphorylated on Tyr-75 by PTPN22. Phosphorylated by FYN on Tyr-260. In case of infection with Y.pseudotuberculosis, dephosphorylated by bacterial phosphatase yopH. Expressed in kidney, lung, liver, spleen, bone marrow and testis. Present in T-cells, B-cells, and all cells of the myelomonocytic lineage. Present in all brain regions, with highest levels in neurons from the Purkinje cell layer, hippocampal gyrus, cortex and substantia nigra (at protein level).

It localises to the cytoplasm. May be involved in B-cell and macrophage adhesion processes. In B-cells, may act by coupling the B-cell receptor (BCR) to integrin activation. May play a role in src signaling pathway. In Mus musculus (Mouse), this protein is Src kinase-associated phosphoprotein 2 (Skap2).